A 108-amino-acid chain; its full sequence is Nucleoid-associated protein BMASAVP1_A1850 (108 aa).

Residues 84–108 form a disordered region; sequence EATSQEKMSGMTSGLPLPPGFKLPF. Over residues 85-95 the composition is skewed to polar residues; sequence ATSQEKMSGMT. Residues 99–108 show a composition bias toward pro residues; the sequence is PLPPGFKLPF.

This sequence belongs to the YbaB/EbfC family. As to quaternary structure, homodimer.

It localises to the cytoplasm. Its subcellular location is the nucleoid. Functionally, binds to DNA and alters its conformation. May be involved in regulation of gene expression, nucleoid organization and DNA protection. The chain is Nucleoid-associated protein BMASAVP1_A1850 from Burkholderia mallei (strain SAVP1).